The chain runs to 851 residues: UPF0508 protein CAGL0M08074g (851 aa).

It belongs to the UPF0508 family.

This Candida glabrata (strain ATCC 2001 / BCRC 20586 / JCM 3761 / NBRC 0622 / NRRL Y-65 / CBS 138) (Yeast) protein is UPF0508 protein CAGL0M08074g.